A 489-amino-acid chain; its full sequence is N-succinylglutamate 5-semialdehyde dehydrogenase (489 aa).

216–221 (GSAATG) contributes to the NAD(+) binding site. Residues Glu-239 and Cys-273 contribute to the active site.

This sequence belongs to the aldehyde dehydrogenase family. AstD subfamily.

The enzyme catalyses N-succinyl-L-glutamate 5-semialdehyde + NAD(+) + H2O = N-succinyl-L-glutamate + NADH + 2 H(+). It functions in the pathway amino-acid degradation; L-arginine degradation via AST pathway; L-glutamate and succinate from L-arginine: step 4/5. Functionally, catalyzes the NAD-dependent reduction of succinylglutamate semialdehyde into succinylglutamate. The sequence is that of N-succinylglutamate 5-semialdehyde dehydrogenase from Erwinia tasmaniensis (strain DSM 17950 / CFBP 7177 / CIP 109463 / NCPPB 4357 / Et1/99).